Consider the following 488-residue polypeptide: Pup--protein ligase (488 aa).

A Mg(2+)-binding site is contributed by Glu34. Arg77 is a binding site for ATP. Residue Tyr79 coordinates Mg(2+). Asp81 functions as the Proton acceptor in the catalytic mechanism. Glu87 serves as a coordination point for Mg(2+). Residues Thr90 and Trp453 each contribute to the ATP site.

This sequence belongs to the Pup ligase/Pup deamidase family. Pup-conjugating enzyme subfamily.

The enzyme catalyses ATP + [prokaryotic ubiquitin-like protein]-L-glutamate + [protein]-L-lysine = ADP + phosphate + N(6)-([prokaryotic ubiquitin-like protein]-gamma-L-glutamyl)-[protein]-L-lysine.. It participates in protein degradation; proteasomal Pup-dependent pathway. The protein operates within protein modification; protein pupylation. Catalyzes the covalent attachment of the prokaryotic ubiquitin-like protein modifier Pup to the proteasomal substrate proteins, thereby targeting them for proteasomal degradation. This tagging system is termed pupylation. The ligation reaction involves the side-chain carboxylate of the C-terminal glutamate of Pup and the side-chain amino group of a substrate lysine. The polypeptide is Pup--protein ligase (Bifidobacterium dentium (strain ATCC 27534 / DSM 20436 / JCM 1195 / Bd1)).